We begin with the raw amino-acid sequence, 173 residues long: MTHPIFMVGARGCGKTTVGHQLAQALGYDFVDTDLFMQQTTNMTVADVVAQEGWHGFRQRESLALQQVASNRCIVATGGGMVLAEANRRFMHDKGIVIYLHADAELLAQRLEENPQDNQRPTLTGRPIAEEMADVLAAREALYRGAAHHVIDASQTPDAIVVSVLKALRLSAA.

An ATP-binding site is contributed by 12-17 (GCGKTT). Positions 16 and 32 each coordinate Mg(2+). Substrate is bound by residues Asp-34, Arg-58, and Gly-79. An LID domain region spans residues 112 to 126 (EENPQDNQRPTLTGR). Arg-120 contacts ATP. Arg-139 provides a ligand contact to substrate. Position 155 (Gln-155) interacts with ATP.

It belongs to the shikimate kinase family. AroL subfamily. In terms of assembly, monomer. Mg(2+) is required as a cofactor.

The protein resides in the cytoplasm. The catalysed reaction is shikimate + ATP = 3-phosphoshikimate + ADP + H(+). The protein operates within metabolic intermediate biosynthesis; chorismate biosynthesis; chorismate from D-erythrose 4-phosphate and phosphoenolpyruvate: step 5/7. Catalyzes the specific phosphorylation of the 3-hydroxyl group of shikimic acid using ATP as a cosubstrate. This Pectobacterium atrosepticum (strain SCRI 1043 / ATCC BAA-672) (Erwinia carotovora subsp. atroseptica) protein is Shikimate kinase 2.